The primary structure comprises 83 residues: Putative beta-neurotoxin RjAa10f (83 aa).

Residues 1–18 (MKILIFIIASFMLIGVWC) form the signal peptide. The LCN-type CS-alpha/beta domain maps to 19–82 (KEGYPMGRDG…VWDPNNNKCV (64 aa)). 4 disulfide bridges follow: Cys-29-Cys-81, Cys-33-Cys-55, Cys-40-Cys-62, and Cys-44-Cys-64.

The protein belongs to the long (4 C-C) scorpion toxin superfamily. Sodium channel inhibitor family. Beta subfamily. As to expression, expressed by the venom gland.

The protein localises to the secreted. Functionally, beta toxins bind voltage-independently at site-4 of sodium channels (Nav) and shift the voltage of activation toward more negative potentials thereby affecting sodium channel activation and promoting spontaneous and repetitive firing. This chain is Putative beta-neurotoxin RjAa10f, found in Rhopalurus junceus (Caribbean blue scorpion).